A 424-amino-acid chain; its full sequence is Enolase (424 aa).

Gln165 contacts (2R)-2-phosphoglycerate. Glu207 acts as the Proton donor in catalysis. 3 residues coordinate Mg(2+): Asp244, Glu283, and Asp310. 4 residues coordinate (2R)-2-phosphoglycerate: Lys335, Arg364, Ser365, and Lys386. Lys335 serves as the catalytic Proton acceptor.

Belongs to the enolase family. It depends on Mg(2+) as a cofactor.

Its subcellular location is the cytoplasm. It localises to the secreted. The protein localises to the cell surface. It catalyses the reaction (2R)-2-phosphoglycerate = phosphoenolpyruvate + H2O. Its pathway is carbohydrate degradation; glycolysis; pyruvate from D-glyceraldehyde 3-phosphate: step 4/5. Functionally, catalyzes the reversible conversion of 2-phosphoglycerate (2-PG) into phosphoenolpyruvate (PEP). It is essential for the degradation of carbohydrates via glycolysis. This Chlamydia abortus (strain DSM 27085 / S26/3) (Chlamydophila abortus) protein is Enolase.